The chain runs to 1118 residues: Protein argonaute 1B (1118 aa).

2 disordered regions span residues 1–175 (MALQ…SRTV) and 188–246 (APMV…RFPL). Residues 10 to 24 (PHHHQVPIMVKKKRT) are compositionally biased toward basic residues. The segment covering 25-35 (GSGSTGESSGE) has biased composition (low complexity). Gly residues-rich tracts occupy residues 54 to 92 (QHGGGRGWVPQHGGRGGGQYQGRGGHYQGRGGQGSHHPG), 100 to 110 (GRGGPGSHHPG), and 118 to 128 (GRGGSGSHHPG). Composition is skewed to low complexity over residues 148-157 (RGGMPQPYYG) and 193-219 (PTPSGAGSSSQPAAEVSSGQVQQQFQQ). A compositionally biased stretch (polar residues) spans 220-241 (LATRDQSSTSQAIQIAPPSSKS). The 114-residue stretch at 457 to 570 (PVIDFVAQLL…LPMEVCKIVE (114 aa)) folds into the PAZ domain. The 322-residue stretch at 746 to 1067 (LLIVILPDNN…AAFRARFYME (322 aa)) folds into the Piwi domain.

The protein belongs to the argonaute family. Ago subfamily.

In terms of biological role, probably involved in the RNA silencing pathway. May bind to short RNAs such as microRNAs (miRNAs) or short interfering RNAs (siRNAs), and represses the translation of mRNAs which are complementary to them. The sequence is that of Protein argonaute 1B (AGO1B) from Oryza sativa subsp. japonica (Rice).